Consider the following 385-residue polypeptide: Acetate kinase (385 aa).

Asparagine 9 lines the Mg(2+) pocket. An ATP-binding site is contributed by lysine 16. Arginine 87 lines the substrate pocket. Aspartate 144 acts as the Proton donor/acceptor in catalysis. Residues histidine 202 to glycine 206 and aspartate 277 to arginine 279 each bind ATP. Position 373 (glutamate 373) interacts with Mg(2+).

Belongs to the acetokinase family. In terms of assembly, homodimer. The cofactor is Mg(2+). Requires Mn(2+) as cofactor.

Its subcellular location is the cytoplasm. It catalyses the reaction acetate + ATP = acetyl phosphate + ADP. It participates in metabolic intermediate biosynthesis; acetyl-CoA biosynthesis; acetyl-CoA from acetate: step 1/2. In terms of biological role, catalyzes the formation of acetyl phosphate from acetate and ATP. Can also catalyze the reverse reaction. This Rickettsia felis (strain ATCC VR-1525 / URRWXCal2) (Rickettsia azadi) protein is Acetate kinase.